The chain runs to 188 residues: UPF0398 protein SSP1297 (188 aa).

The protein belongs to the UPF0398 family.

The chain is UPF0398 protein SSP1297 from Staphylococcus saprophyticus subsp. saprophyticus (strain ATCC 15305 / DSM 20229 / NCIMB 8711 / NCTC 7292 / S-41).